The chain runs to 358 residues: 4-diphosphocytidyl-2-C-methyl-D-erythritol kinase (358 aa).

The active site involves lysine 24. 138–148 (PVAGGMAGGSA) contacts ATP. Residue aspartate 186 is part of the active site.

The protein belongs to the GHMP kinase family. IspE subfamily.

The catalysed reaction is 4-CDP-2-C-methyl-D-erythritol + ATP = 4-CDP-2-C-methyl-D-erythritol 2-phosphate + ADP + H(+). It participates in isoprenoid biosynthesis; isopentenyl diphosphate biosynthesis via DXP pathway; isopentenyl diphosphate from 1-deoxy-D-xylulose 5-phosphate: step 3/6. In terms of biological role, catalyzes the phosphorylation of the position 2 hydroxy group of 4-diphosphocytidyl-2C-methyl-D-erythritol. The polypeptide is 4-diphosphocytidyl-2-C-methyl-D-erythritol kinase (Corynebacterium jeikeium (strain K411)).